Here is a 99-residue protein sequence, read N- to C-terminus: Malonate decarboxylase acyl carrier protein (99 aa).

S25 carries the O-(phosphoribosyl dephospho-coenzyme A)serine modification.

It belongs to the MdcC family. Post-translationally, covalently binds the prosthetic group of malonate decarboxylase.

The protein resides in the cytoplasm. Its function is as follows. Subunit of malonate decarboxylase, it is an acyl carrier protein to which acetyl and malonyl thioester residues are bound via a 2'-(5''-phosphoribosyl)-3'-dephospho-CoA prosthetic group and turn over during the catalytic mechanism. This is Malonate decarboxylase acyl carrier protein from Pseudomonas fluorescens (strain SBW25).